Here is a 272-residue protein sequence, read N- to C-terminus: NH(3)-dependent NAD(+) synthetase (272 aa).

45-52 (GISGGQDS) serves as a coordination point for ATP. Residue Asp-51 coordinates Mg(2+). Arg-138 lines the deamido-NAD(+) pocket. Thr-158 is a binding site for ATP. A Mg(2+)-binding site is contributed by Glu-163. Deamido-NAD(+)-binding residues include Lys-171 and Asp-178. Residues Lys-187 and Thr-209 each contribute to the ATP site. Residue 258-259 (HK) participates in deamido-NAD(+) binding.

This sequence belongs to the NAD synthetase family. As to quaternary structure, homodimer.

It carries out the reaction deamido-NAD(+) + NH4(+) + ATP = AMP + diphosphate + NAD(+) + H(+). The protein operates within cofactor biosynthesis; NAD(+) biosynthesis; NAD(+) from deamido-NAD(+) (ammonia route): step 1/1. Its function is as follows. Catalyzes the ATP-dependent amidation of deamido-NAD to form NAD. Uses ammonia as a nitrogen source. The polypeptide is NH(3)-dependent NAD(+) synthetase (Bacillus mycoides (strain KBAB4) (Bacillus weihenstephanensis)).